We begin with the raw amino-acid sequence, 644 residues long: Acetyl-coenzyme A synthetase 2 (644 aa).

CoA contacts are provided by residues Arg189–Lys192, Thr307, and Asn331. Residues Gly383–Pro385, Asp407–Thr412, Asp496, and Arg511 each bind ATP. Ser519 lines the CoA pocket. Arg522 is a binding site for ATP. Residues Val533, His535, and Val538 each contribute to the Mg(2+) site. Lys605 bears the N6-acetyllysine mark.

It belongs to the ATP-dependent AMP-binding enzyme family. Mg(2+) serves as cofactor. In terms of processing, acetylated. Deacetylation by the SIR2-homolog deacetylase activates the enzyme.

It carries out the reaction acetate + ATP + CoA = acetyl-CoA + AMP + diphosphate. Catalyzes the conversion of acetate into acetyl-CoA (AcCoA), an essential intermediate at the junction of anabolic and catabolic pathways. AcsA undergoes a two-step reaction. In the first half reaction, AcsA combines acetate with ATP to form acetyl-adenylate (AcAMP) intermediate. In the second half reaction, it can then transfer the acetyl group from AcAMP to the sulfhydryl group of CoA, forming the product AcCoA. The sequence is that of Acetyl-coenzyme A synthetase 2 from Pseudomonas putida (strain ATCC 47054 / DSM 6125 / CFBP 8728 / NCIMB 11950 / KT2440).